Consider the following 414-residue polypeptide: D-mannose isomerase (414 aa).

Catalysis depends on proton donor/acceptor residues His255 and His390.

This sequence belongs to the N-acylglucosamine 2-epimerase family. As to quaternary structure, monomer.

The enzyme catalyses D-mannose = D-fructose. Its activity is regulated as follows. Strongly inhibited by Ag(2+), Cu(2+) and cetyltrimethyl ammonium bromide (CTAB). Catalyzes the reversible isomerization of D-mannose to D-fructose. Shows high specific activity towards mannose and fructose, and has no detectable activity towards other monosaccharides and disaccharides. The protein is D-mannose isomerase of Pseudomonas cannabina pv. alisalensis.